Consider the following 739-residue polypeptide: Transcription regulator protein BACH1 (739 aa).

One can recognise a BTB domain in the interval cysteine 34 to lysine 100. Serine 196 is subject to Phosphoserine. Disordered stretches follow at residues methionine 287–leucine 321 and lysine 344–valine 391. 2 stretches are compositionally biased toward basic and acidic residues: residues valine 346–glutamate 364 and proline 376–valine 391. At serine 448 the chain carries Phosphoserine. The bZIP domain maps to cysteine 560–leucine 623. Residues arginine 565–lysine 581 form a basic motif region. Positions isoleucine 585 to isoleucine 592 are leucine-zipper. A disordered region spans residues proline 679–alanine 708. Low complexity predominate over residues glutamine 699–alanine 708.

The protein belongs to the bZIP family. CNC subfamily. Heterodimer of BACH1 and MAFK. Ubiquitinated by the SCF(FBXL17) complex or by the by the SCF(FBXO22) complex, leading to its degradation by the proteasome. Under oxidative stress, reactive oxygen species covalently modify cysteine residues on the bZIP domain of BACH1 and release it from chromatin. If the BTB domain of BACH1 remains intact, its beta1-alpha6 degron is recognized by FBXO22, promoting its ubiquitination and degradation. If the structural integrity of the beta1-alpha6 degron is compromised, FBXL17 will transiently associate with the BACH1 BTB dimer and remodel it into stably bound monomer for ubiquitination and degradation. Ubiquitous.

It is found in the nucleus. In terms of biological role, transcriptional regulator that acts as a repressor or activator, depending on the context. Binds to NF-E2 DNA binding sites. Plays important roles in coordinating transcription activation and repression by MAFK. Together with MAF, represses the transcription of genes under the control of the NFE2L2 oxidative stress pathway. In Mus musculus (Mouse), this protein is Transcription regulator protein BACH1 (Bach1).